A 318-amino-acid chain; its full sequence is MADTPVPIFNLAALREGADQEKFRECVTGMGVFYLTGYGAGDKDHRLATDTAMDFFANGTEAEKAAVTTDVPTMRRGYSALEAESTAQVTRTGSYTDYSMSFSMGISGNVFPSPEFERVWTEYFDKLYAAAQETARLVLTASGGYDAEIVGSLDELLDADPVLRLRYFPEVPEHRSAEHEPRRMAPHYDLSIITFIHQTPCANGFVSLQAEIGGELVSLPVVEDAVVVMCGAMAPLATQGALPAPRHHVRSPGAGMREGSDRTSSVFFLRPTTDFSFSVAKARSYGLAVDLDMETATFGDWIGTNYVTMHAKNEPQAG.

Positions 158 to 271 (DADPVLRLRY…RTSSVFFLRP (114 aa)) constitute a Fe2OG dioxygenase domain.

The protein belongs to the iron/ascorbate-dependent oxidoreductase family. As to quaternary structure, monomer. Requires Fe cation as cofactor.

It catalyses the reaction deacetoxycephalosporin C + 2-oxoglutarate + O2 = deacetylcephalosporin C + succinate + CO2. It participates in antibiotic biosynthesis; cephalosporin C biosynthesis. Functionally, hydroxylation of desacetoxicephalosporin C in 3'position to form deacetylcephalosporin C. This chain is Deacetoxycephalosporin C hydroxylase (cefF), found in Streptomyces clavuligerus.